Consider the following 509-residue polypeptide: Seipin-3 (509 aa).

Residues 33–73 form a disordered region; the sequence is YDCLNSSPPANLRRRRLPMDTDSSSSSSTSSLESCEKRSTV. A compositionally biased stretch (low complexity) spans 52-63; the sequence is DTDSSSSSSTSS. The next 2 membrane-spanning stretches (helical) occupy residues 238-258 and 455-475; these read LFCA…AFMI and LFVW…LVFF.

Belongs to the seipin family. As to expression, expressed in seeds, seedlings, leaves, stems and roots. Not detected in flowers.

It is found in the endoplasmic reticulum membrane. Involved in lipid metabolism and lipid droplet (LD) morphology, number, and size. Supports the formation of small-sized LDs and modulates triacylglycerol accumulation. Induces probably a reorganization of the endoplasmic reticulum into LD-forming domains. The polypeptide is Seipin-3 (Arabidopsis thaliana (Mouse-ear cress)).